The sequence spans 543 residues: CTP synthase (543 aa).

The interval 1–265 (MTRYIFVTGG…DDYVVERFGL (265 aa)) is amidoligase domain. CTP is bound at residue S13. Position 13 (S13) interacts with UTP. Residues 14 to 19 (SLGKGI) and D71 each bind ATP. 2 residues coordinate Mg(2+): D71 and E139. CTP-binding positions include 146–148 (DIE), 186–191 (KTKPTQ), and K222. UTP contacts are provided by residues 186–191 (KTKPTQ) and K222. The Glutamine amidotransferase type-1 domain occupies 290-541 (NIAMVGKYME…VNAALEYKAK (252 aa)). G351 provides a ligand contact to L-glutamine. The Nucleophile; for glutamine hydrolysis role is filled by C378. Residues 379–382 (LGMQ), E402, and R469 contribute to the L-glutamine site. Residues H514 and E516 contribute to the active site.

The protein belongs to the CTP synthase family. In terms of assembly, homotetramer.

The enzyme catalyses UTP + L-glutamine + ATP + H2O = CTP + L-glutamate + ADP + phosphate + 2 H(+). The catalysed reaction is L-glutamine + H2O = L-glutamate + NH4(+). It carries out the reaction UTP + NH4(+) + ATP = CTP + ADP + phosphate + 2 H(+). It participates in pyrimidine metabolism; CTP biosynthesis via de novo pathway; CTP from UDP: step 2/2. With respect to regulation, allosterically activated by GTP, when glutamine is the substrate; GTP has no effect on the reaction when ammonia is the substrate. The allosteric effector GTP functions by stabilizing the protein conformation that binds the tetrahedral intermediate(s) formed during glutamine hydrolysis. Inhibited by the product CTP, via allosteric rather than competitive inhibition. Its function is as follows. Catalyzes the ATP-dependent amination of UTP to CTP with either L-glutamine or ammonia as the source of nitrogen. Regulates intracellular CTP levels through interactions with the four ribonucleotide triphosphates. This Stutzerimonas stutzeri (strain A1501) (Pseudomonas stutzeri) protein is CTP synthase.